A 121-amino-acid polypeptide reads, in one-letter code: Small ribosomal subunit protein uS13 (121 aa).

The segment at histidine 91–lysine 121 is disordered.

It belongs to the universal ribosomal protein uS13 family. As to quaternary structure, part of the 30S ribosomal subunit. Forms a loose heterodimer with protein S19. Forms two bridges to the 50S subunit in the 70S ribosome.

Its function is as follows. Located at the top of the head of the 30S subunit, it contacts several helices of the 16S rRNA. In the 70S ribosome it contacts the 23S rRNA (bridge B1a) and protein L5 of the 50S subunit (bridge B1b), connecting the 2 subunits; these bridges are implicated in subunit movement. Contacts the tRNAs in the A and P-sites. The polypeptide is Small ribosomal subunit protein uS13 (Cupriavidus pinatubonensis (strain JMP 134 / LMG 1197) (Cupriavidus necator (strain JMP 134))).